Reading from the N-terminus, the 232-residue chain is Ion-translocating oxidoreductase complex subunit E (232 aa).

A run of 6 helical transmembrane segments spans residues 18-38, 39-59, 69-89, 93-113, 128-148, and 182-202; these read GLVQLLGLCPLLAVTATLTNA, LGLGLATVAVLIGSNVLVSLV, IPVFVMIIAALVTVVQLVINA, GLYLSLGIFLPLIVTNCVIIG, AFDGLMMGTGFTAVLAVLGAV, and SFLLAMLPPGAFIAMGLLIAG.

This sequence belongs to the NqrDE/RnfAE family. In terms of assembly, the complex is composed of six subunits: RnfA, RnfB, RnfC, RnfD, RnfE and RnfG.

The protein localises to the cell inner membrane. Its function is as follows. Part of a membrane-bound complex that couples electron transfer with translocation of ions across the membrane. The polypeptide is Ion-translocating oxidoreductase complex subunit E (Shewanella amazonensis (strain ATCC BAA-1098 / SB2B)).